The following is a 110-amino-acid chain: Large ribosomal subunit protein uL22 (110 aa).

This sequence belongs to the universal ribosomal protein uL22 family. In terms of assembly, part of the 50S ribosomal subunit.

Functionally, this protein binds specifically to 23S rRNA; its binding is stimulated by other ribosomal proteins, e.g. L4, L17, and L20. It is important during the early stages of 50S assembly. It makes multiple contacts with different domains of the 23S rRNA in the assembled 50S subunit and ribosome. In terms of biological role, the globular domain of the protein is located near the polypeptide exit tunnel on the outside of the subunit, while an extended beta-hairpin is found that lines the wall of the exit tunnel in the center of the 70S ribosome. The sequence is that of Large ribosomal subunit protein uL22 from Pectobacterium atrosepticum (strain SCRI 1043 / ATCC BAA-672) (Erwinia carotovora subsp. atroseptica).